Consider the following 298-residue polypeptide: Heterogeneous nuclear ribonucleoprotein C (298 aa).

The residue at position 2 (A2) is an N-acetylalanine. Glycyl lysine isopeptide (Lys-Gly) (interchain with G-Cter in SUMO2) cross-links involve residues K8, K50, K89, and K94. In terms of domain architecture, RRM spans 16-87 (SRVFIGNLNT…QVLDINLAAE (72 aa)). Phosphoserine is present on S108. 2 disordered regions span residues 131-177 (PPPP…VKGD) and 204-298 (EKEQ…EDDS). A Nuclear localization signal motif is present at residues 142–148 (PSKRQRV). Residues S149 and S153 each carry the phosphoserine modification. The segment covering 162–173 (SKSGQRGSSSKS) has biased composition (low complexity). K163 bears the N6-acetyllysine; alternate mark. Residue K163 forms a Glycyl lysine isopeptide (Lys-Gly) (interchain with G-Cter in SUMO2); alternate linkage. Residues 176-211 (GDDLQAIKKELTQIKQKVDSLLESLEKIEKEQSKQA) adopt a coiled-coil conformation. K209 is covalently cross-linked (Glycyl lysine isopeptide (Lys-Gly) (interchain with G-Cter in SUMO2)). Phosphoserine occurs at positions 214, 216, and 217. K222 is covalently cross-linked (Glycyl lysine isopeptide (Lys-Gly) (interchain with G-Cter in SUMO2)). K225 is covalently cross-linked (Glycyl lysine isopeptide (Lys-Gly) (interchain with G-Cter in SUMO2); alternate). K225 is covalently cross-linked (Glycyl lysine isopeptide (Lys-Gly) (interchain with G-Cter in SUMO1); alternate). Phosphoserine is present on residues S226, S231, S232, and S234. Residues 235–246 (VKKDETNVKMES) are compositionally biased toward basic and acidic residues. Residues K236 and K237 each participate in a glycyl lysine isopeptide (Lys-Gly) (interchain with G-Cter in SUMO2) cross-link. Residue K243 forms a Glycyl lysine isopeptide (Lys-Gly) (interchain with G-Cter in SUMO2); alternate linkage. K243 participates in a covalent cross-link: Glycyl lysine isopeptide (Lys-Gly) (interchain with G-Cter in SUMO); alternate. S246 and S253 each carry phosphoserine. A compositionally biased stretch (acidic residues) spans 248-269 (AGADDSAEEGDLLDDDDNEDRG). Basic and acidic residues predominate over residues 270–279 (DDQLELKDDE). Residues 280 to 298 (KEPEEGEDDRDSANGEDDS) show a composition bias toward acidic residues. A phosphoserine mark is found at S291 and S298.

Belongs to the RRM HNRPC family. RALY subfamily. Tetramer composed of 3 copies of isoform C1 and 1 copy of isoform C2. Assembly of 3 tetramers with bound pre-mRNA gives rise to a 19S complex that interacts with HNRNPA2B1 tetramers. Component of the 40S hnRNP particle. Identified in the spliceosome C complex. Interacts with IGF2BP1. Interacts with PPIA/CYPA. In terms of processing, phosphorylated on Ser-253 and Ser-291 in resting cells. Post-translationally, sumoylated. Sumoylation reduces affinity for mRNA. Ubiquitinated and degraded after nucleo-cytoplasmic transport by YWHAE.

It localises to the nucleus. Binds pre-mRNA and nucleates the assembly of 40S hnRNP particles. Interacts with poly-U tracts in the 3'-UTR or 5'-UTR of mRNA and modulates the stability and the level of translation of bound mRNA molecules. Single HNRNPC tetramers bind 230-240 nucleotides. Trimers of HNRNPC tetramers bind 700 nucleotides. May play a role in the early steps of spliceosome assembly and pre-mRNA splicing. N6-methyladenosine (m6A) has been shown to alter the local structure in mRNAs and long non-coding RNAs (lncRNAs) via a mechanism named 'm(6)A-switch', facilitating binding of HNRNPC, leading to regulation of mRNA splicing. The polypeptide is Heterogeneous nuclear ribonucleoprotein C (Rattus norvegicus (Rat)).